Here is a 119-residue protein sequence, read N- to C-terminus: Large ribosomal subunit protein uL18 (119 aa).

This sequence belongs to the universal ribosomal protein uL18 family. Part of the 50S ribosomal subunit; part of the 5S rRNA/L5/L18/L25 subcomplex. Contacts the 5S and 23S rRNAs.

Functionally, this is one of the proteins that bind and probably mediate the attachment of the 5S RNA into the large ribosomal subunit, where it forms part of the central protuberance. In Cupriavidus necator (strain ATCC 17699 / DSM 428 / KCTC 22496 / NCIMB 10442 / H16 / Stanier 337) (Ralstonia eutropha), this protein is Large ribosomal subunit protein uL18.